Consider the following 291-residue polypeptide: MIFAKGHGTENDFVVLPDLDAALSLTPSAVAALCDRRRGLGADGVLRVTRAGAARAAGVFDRLPDGVSAGDWYMDYRNADGSIAQMCGNGVRVFAHYLRASGLESADEFVVGSLAGPRPVVLHGFDPARATTAEVTVEMGKANQFGAGSAVVGGRSFDGLAVDVGNPHLACVGITADDLAALDVAAPVSFDPALFPDGVNVEVLTASVDGAVSMRVHERGVGETRSCGTGTVAATVAALAHDGADTGTLRVRIPGGEVTVTVTESTSYLRGPSVLVARGELDPHWWHAVAG.

2 residues coordinate substrate: Asn-11 and Asn-78. Cys-87 functions as the Proton donor in the catalytic mechanism. Residues 88 to 89 (GN), Asn-166, Asn-200, and 218 to 219 (ER) contribute to the substrate site. Cys-227 functions as the Proton acceptor in the catalytic mechanism. 228–229 (GT) serves as a coordination point for substrate.

Belongs to the diaminopimelate epimerase family. As to quaternary structure, homodimer.

It is found in the cytoplasm. It carries out the reaction (2S,6S)-2,6-diaminopimelate = meso-2,6-diaminopimelate. The protein operates within amino-acid biosynthesis; L-lysine biosynthesis via DAP pathway; DL-2,6-diaminopimelate from LL-2,6-diaminopimelate: step 1/1. Its function is as follows. Catalyzes the stereoinversion of LL-2,6-diaminopimelate (L,L-DAP) to meso-diaminopimelate (meso-DAP), a precursor of L-lysine and an essential component of the bacterial peptidoglycan. The sequence is that of Diaminopimelate epimerase from Mycolicibacterium smegmatis (strain ATCC 700084 / mc(2)155) (Mycobacterium smegmatis).